The chain runs to 358 residues: GTPase Obg (358 aa).

Residues 1 to 158 form the Obg domain; that stretch reads MFVDNVDIYV…RHVRLELKLI (158 aa). Residues 159–355 enclose the OBG-type G domain; sequence ADVGLVGFPN…LKYLLHESVR (197 aa). GTP is bound by residues 165-172, 190-194, 212-215, 280-283, and 336-338; these read GFPNVGKS, FTTLI, DIPG, SKVD, and SSA. Mg(2+) contacts are provided by Ser-172 and Thr-192.

Belongs to the TRAFAC class OBG-HflX-like GTPase superfamily. OBG GTPase family. In terms of assembly, monomer. Mg(2+) is required as a cofactor.

Its subcellular location is the cytoplasm. In terms of biological role, an essential GTPase which binds GTP, GDP and possibly (p)ppGpp with moderate affinity, with high nucleotide exchange rates and a fairly low GTP hydrolysis rate. Plays a role in control of the cell cycle, stress response, ribosome biogenesis and in those bacteria that undergo differentiation, in morphogenesis control. This chain is GTPase Obg, found in Wolinella succinogenes (strain ATCC 29543 / DSM 1740 / CCUG 13145 / JCM 31913 / LMG 7466 / NCTC 11488 / FDC 602W) (Vibrio succinogenes).